We begin with the raw amino-acid sequence, 205 residues long: ATP phosphoribosyltransferase (205 aa).

Belongs to the ATP phosphoribosyltransferase family. Short subfamily. As to quaternary structure, heteromultimer composed of HisG and HisZ subunits.

Its subcellular location is the cytoplasm. The enzyme catalyses 1-(5-phospho-beta-D-ribosyl)-ATP + diphosphate = 5-phospho-alpha-D-ribose 1-diphosphate + ATP. It participates in amino-acid biosynthesis; L-histidine biosynthesis; L-histidine from 5-phospho-alpha-D-ribose 1-diphosphate: step 1/9. Its function is as follows. Catalyzes the condensation of ATP and 5-phosphoribose 1-diphosphate to form N'-(5'-phosphoribosyl)-ATP (PR-ATP). Has a crucial role in the pathway because the rate of histidine biosynthesis seems to be controlled primarily by regulation of HisG enzymatic activity. This chain is ATP phosphoribosyltransferase, found in Nitratiruptor sp. (strain SB155-2).